The primary structure comprises 414 residues: Enolase (414 aa).

Gln162 lines the (2R)-2-phosphoglycerate pocket. Glu204 (proton donor) is an active-site residue. Mg(2+) contacts are provided by Asp239, Glu280, and Asp307. Residues Lys332, Arg361, Ser362, and Lys383 each coordinate (2R)-2-phosphoglycerate. The Proton acceptor role is filled by Lys332.

This sequence belongs to the enolase family. Requires Mg(2+) as cofactor.

The protein resides in the cytoplasm. Its subcellular location is the secreted. It is found in the cell surface. It catalyses the reaction (2R)-2-phosphoglycerate = phosphoenolpyruvate + H2O. The protein operates within carbohydrate degradation; glycolysis; pyruvate from D-glyceraldehyde 3-phosphate: step 4/5. Its function is as follows. Catalyzes the reversible conversion of 2-phosphoglycerate (2-PG) into phosphoenolpyruvate (PEP). It is essential for the degradation of carbohydrates via glycolysis. This is Enolase from Campylobacter jejuni subsp. doylei (strain ATCC BAA-1458 / RM4099 / 269.97).